The following is a 678-amino-acid chain: Inositol-trisphosphate 3-kinase C (678 aa).

Disordered stretches follow at residues 26–128 (LEAL…RRNS) and 151–300 (DLQS…LDLS). Residues 44-58 (PGAGGPTGRPEGGGP) are compositionally biased toward gly residues. 2 stretches are compositionally biased toward basic and acidic residues: residues 61 to 76 (WIEESSLHSEAERTDL) and 107 to 116 (EKPRQNKELD). Ser-160 bears the Phosphoserine mark. Composition is skewed to basic and acidic residues over residues 173 to 196 (ELDRSDMWQTLPERDNKPRVDNLR) and 220 to 236 (SGKELSADASRTPHDTD). Residues 318–326 (LCPVPRLII) carry the Nuclear export signal motif. A disordered region spans residues 328–380 (PETPEPEAQPVGPQSRIEGGTGGFSSASSFDESEDDLVAGGGGTSDPEDRAGS). Thr-330 is modified (phosphothreonine). A Phosphoserine modification is found at Ser-398. Residues Lys-426, 466 to 468 (EDL), and Asp-479 each bind ATP. Residues Lys-481, 502–508 (RKDMYEK), and 529–536 (KPRYMQWR) contribute to the substrate site. Positions 504 to 512 (DMYEKMVAV) are calmodulin-binding. ATP is bound by residues Lys-553 and Asp-633. A substrate-binding site is contributed by Lys-636.

The protein belongs to the inositol phosphokinase (IPK) family.

Its subcellular location is the nucleus. The protein localises to the cytoplasm. The enzyme catalyses 1D-myo-inositol 1,4,5-trisphosphate + ATP = 1D-myo-inositol 1,3,4,5-tetrakisphosphate + ADP + H(+). Activated by calcium/calmodulin. Inhibited by high concentrations of the substrate Ins(1,2,4)P3, and allosterically activated by the product Ins(1,3,4,5)P4. Catalyzes the phosphorylation of 1D-myo-inositol 1,4,5-trisphosphate (InsP3) into 1D-myo-inositol 1,3,4,5-tetrakisphosphate and participates to the regulation of calcium homeostasis. Can phosphorylate inositol 2,4,5-triphosphate to inositol 2,4,5,6-tetraphosphate. This Mus musculus (Mouse) protein is Inositol-trisphosphate 3-kinase C (Itpkc).